The primary structure comprises 419 residues: L-rhamnose isomerase (419 aa).

3 residues coordinate Mn(2+): His262, Asp294, and Asp296.

Belongs to the rhamnose isomerase family. In terms of assembly, homotetramer. Mn(2+) serves as cofactor.

The protein localises to the cytoplasm. It carries out the reaction L-rhamnopyranose = L-rhamnulose. The protein operates within carbohydrate degradation; L-rhamnose degradation; glycerone phosphate from L-rhamnose: step 1/3. Its function is as follows. Catalyzes the interconversion of L-rhamnose and L-rhamnulose. This Escherichia coli O139:H28 (strain E24377A / ETEC) protein is L-rhamnose isomerase.